Consider the following 795-residue polypeptide: Probable diacylglycerol kinase 3 (795 aa).

EF-hand domains lie at 170–205 (TPEN…MMNV) and 215–250 (ELEQ…NIPL). 8 residues coordinate Ca(2+): Asp183, Asp185, Asn187, Glu194, Asp228, Asp230, Asp232, and Glu239. 2 Phorbol-ester/DAG-type zinc fingers span residues 265-316 (SHVW…ATNC) and 329-375 (YHHW…AQEC). The 136-residue stretch at 423 to 558 (NDCRPLLVLV…MDRWQIKIEI (136 aa)) folds into the DAGKc domain.

Belongs to the eukaryotic diacylglycerol kinase family. As to quaternary structure, monomer.

It catalyses the reaction a 1,2-diacyl-sn-glycerol + ATP = a 1,2-diacyl-sn-glycero-3-phosphate + ADP + H(+). In terms of biological role, involved in AFD-neuron mediated thermotaxis. Regulates behavior to environmental temperature. Thought to have a role in olfactory adaptation by affecting diacylglycerol levels. This chain is Probable diacylglycerol kinase 3 (dgk-3), found in Caenorhabditis elegans.